Consider the following 694-residue polypeptide: Long-chain-fatty-acid--CoA ligase 3 (694 aa).

Residues 1 to 25 form a disordered region; sequence MSEQHSVAVGKAANEHETAPRRNVR. At S2 the chain carries N-acetylserine. 269–280 serves as a coordination point for ATP; that stretch reads YTSGSISAPKGV. An FACS motif is present at residues 527–576; it reads DGWFRTGDIVEWTPKGQLKIIDRRKNLVKTLNGEYIALEKLESVYRSNSY.

Belongs to the ATP-dependent AMP-binding enzyme family. Interacts with FRK1. Mg(2+) serves as cofactor.

It is found in the cell membrane. It catalyses the reaction a long-chain fatty acid + ATP + CoA = a long-chain fatty acyl-CoA + AMP + diphosphate. The catalysed reaction is (9Z)-octadecenoate + ATP + CoA = (9Z)-octadecenoyl-CoA + AMP + diphosphate. It carries out the reaction hexadecanoate + ATP + CoA = hexadecanoyl-CoA + AMP + diphosphate. The enzyme catalyses (9Z)-hexadecenoate + ATP + CoA = (9Z)-hexadecenoyl-CoA + AMP + diphosphate. It catalyses the reaction (9Z)-tetradecenoate + ATP + CoA = (9Z)-tetradecenoyl-CoA + AMP + diphosphate. The catalysed reaction is (9Z,12Z)-octadecadienoate + ATP + CoA = (9Z,12Z)-octadecadienoyl-CoA + AMP + diphosphate. Activates endogenous long-chain fatty acids (LCFA) by esterification of the fatty acids into metabolically active CoA-thioesters for subsequent degradation or incorporation into phospholipids. Acts preferentially on C16 and C18 fatty acids with a cis-double bond at C-9-C-10. The sequence is that of Long-chain-fatty-acid--CoA ligase 3 (FAA3) from Saccharomyces cerevisiae (strain ATCC 204508 / S288c) (Baker's yeast).